The primary structure comprises 787 residues: Serine/threonine-protein kinase PLK4 (787 aa).

Residues 14 to 268 form the Protein kinase domain; sequence YEVQHLLGKG…LEQVLRHPFM (255 aa). ATP contacts are provided by residues 20 to 28 and Lys-43; that span reads LGKGGFASV. Asp-139 functions as the Proton acceptor in the catalytic mechanism. Residues 311–336 are disordered; sequence SNESRSSQRLRSIEKSAQSSSNPQML. Residues 386–505 form the Cryptic POLO box 1 (CPB1) domain; sequence EQQMRVPPLN…ARFVGLVKSK (120 aa). In terms of domain architecture, Cryptic POLO box 2 (CPB2) spans 506–613; that stretch reads TPKITYFSSL…GRRPLTDVSH (108 aa). A POLO box domain is found at 675–755; it reads PIKRINIPDV…IPQVKLRLKC (81 aa).

It belongs to the protein kinase superfamily. Ser/Thr protein kinase family. CDC5/Polo subfamily. As to quaternary structure, homodimer. Ubiquitinated by the SCF(Slimb) ubiquitin ligase complex; leading to its degradation by the proteasome during interphase and regulating centriole number and ensuring the block to centriole reduplication.

The protein localises to the cytoplasm. Its subcellular location is the cytoskeleton. The protein resides in the microtubule organizing center. It localises to the centrosome. It is found in the centriole. The catalysed reaction is L-seryl-[protein] + ATP = O-phospho-L-seryl-[protein] + ADP + H(+). It carries out the reaction L-threonyl-[protein] + ATP = O-phospho-L-threonyl-[protein] + ADP + H(+). In terms of biological role, serine/threonine-protein kinase that plays a central role in centriole duplication. Able to trigger procentriole formation on the surface of the mother centriole cylinder, using mother centriole as a platform, leading to the recruitment of centriole biogenesis proteins such as sas-6. When overexpressed, it is able to induce centrosome amplification through the simultaneous generation of multiple procentrioles adjoining each parental centriole during S phase. Centrosome amplification following overexpression can initiate tumorigenesis, highlighting the importance of centrosome regulation in cancers. The sequence is that of Serine/threonine-protein kinase PLK4 (SAK) from Drosophila willistoni (Fruit fly).